We begin with the raw amino-acid sequence, 209 residues long: Large ribosomal subunit protein uL3 (209 aa).

The tract at residues 127-151 (SGGPSSHGSKFHRHLGGTGQATTPA) is disordered.

It belongs to the universal ribosomal protein uL3 family. As to quaternary structure, part of the 50S ribosomal subunit. Forms a cluster with proteins L14 and L19.

In terms of biological role, one of the primary rRNA binding proteins, it binds directly near the 3'-end of the 23S rRNA, where it nucleates assembly of the 50S subunit. The sequence is that of Large ribosomal subunit protein uL3 from Borrelia turicatae (strain 91E135).